The following is a 248-amino-acid chain: MKSVLKVSLAALTLAFAVSSHAADKKLVVATDTAFVPFEFKQGDKYVGFDVDLWAAIAKELKLDYELKPMDFSGIIPALQTKNVDLALAGITITDERKKAIDFSDGYYKSGLLVMVKANNNDVKSVKDLDGKVVAVKSGTGSVDYAKANIKTKDLRQFPNIDNAYMELGTNRADAVLHDTPNILYFIKTAGNGQFKAVGDSLEAQQYGIAFPKGSDELRDKVNGALKTLRENGTYNEIYKKWFGTEPK.

The first 22 residues, 1 to 22 (MKSVLKVSLAALTLAFAVSSHA), serve as a signal peptide directing secretion.

Belongs to the bacterial solute-binding protein 3 family.

The protein localises to the periplasm. Its function is as follows. Involved in a glutamine-transport system GlnHPQ. The chain is Glutamine-binding periplasmic protein (glnH) from Escherichia coli O157:H7.